Here is a 962-residue protein sequence, read N- to C-terminus: UvrABC system protein A (962 aa).

38–45 (GISGSGKS) serves as a coordination point for ATP. ABC transporter domains lie at 319–597 (WSKS…PDSL) and 617–944 (PSGR…RFLR). 649–656 (GVSGSGKS) provides a ligand contact to ATP. Residues 748–774 (CEACGGDGIIKIEMHFLADVYVPCEVC) form a C4-type zinc finger.

The protein belongs to the ABC transporter superfamily. UvrA family. In terms of assembly, forms a heterotetramer with UvrB during the search for lesions.

It localises to the cytoplasm. In terms of biological role, the UvrABC repair system catalyzes the recognition and processing of DNA lesions. UvrA is an ATPase and a DNA-binding protein. A damage recognition complex composed of 2 UvrA and 2 UvrB subunits scans DNA for abnormalities. When the presence of a lesion has been verified by UvrB, the UvrA molecules dissociate. In Methanothermobacter thermautotrophicus (strain ATCC 29096 / DSM 1053 / JCM 10044 / NBRC 100330 / Delta H) (Methanobacterium thermoautotrophicum), this protein is UvrABC system protein A.